The chain runs to 134 residues: Large ribosomal subunit protein eL32 (134 aa).

It belongs to the eukaryotic ribosomal protein eL32 family.

In Apis mellifera (Honeybee), this protein is Large ribosomal subunit protein eL32 (RpL32).